A 198-amino-acid chain; its full sequence is Ribonuclease HII (198 aa).

An RNase H type-2 domain is found at 10-198; sequence QLVAGVDEVG…PVKRALGLAS (189 aa). Positions 16, 17, and 108 each coordinate a divalent metal cation.

This sequence belongs to the RNase HII family. Mn(2+) is required as a cofactor. Requires Mg(2+) as cofactor.

It is found in the cytoplasm. The catalysed reaction is Endonucleolytic cleavage to 5'-phosphomonoester.. In terms of biological role, endonuclease that specifically degrades the RNA of RNA-DNA hybrids. The polypeptide is Ribonuclease HII (Shigella sonnei (strain Ss046)).